The chain runs to 364 residues: UDP-N-acetylglucosamine--N-acetylmuramyl-(pentapeptide) pyrophosphoryl-undecaprenol N-acetylglucosamine transferase 1 (364 aa).

UDP-N-acetyl-alpha-D-glucosamine-binding positions include threonine 10–glycine 12, asparagine 124, serine 195, isoleucine 250, and glutamine 295.

Belongs to the glycosyltransferase 28 family. MurG subfamily.

Its subcellular location is the cell membrane. It carries out the reaction di-trans,octa-cis-undecaprenyl diphospho-N-acetyl-alpha-D-muramoyl-L-alanyl-D-glutamyl-meso-2,6-diaminopimeloyl-D-alanyl-D-alanine + UDP-N-acetyl-alpha-D-glucosamine = di-trans,octa-cis-undecaprenyl diphospho-[N-acetyl-alpha-D-glucosaminyl-(1-&gt;4)]-N-acetyl-alpha-D-muramoyl-L-alanyl-D-glutamyl-meso-2,6-diaminopimeloyl-D-alanyl-D-alanine + UDP + H(+). It functions in the pathway cell wall biogenesis; peptidoglycan biosynthesis. Its function is as follows. Cell wall formation. Catalyzes the transfer of a GlcNAc subunit on undecaprenyl-pyrophosphoryl-MurNAc-pentapeptide (lipid intermediate I) to form undecaprenyl-pyrophosphoryl-MurNAc-(pentapeptide)GlcNAc (lipid intermediate II). In Bacillus anthracis, this protein is UDP-N-acetylglucosamine--N-acetylmuramyl-(pentapeptide) pyrophosphoryl-undecaprenol N-acetylglucosamine transferase 1.